A 1551-amino-acid chain; its full sequence is UDP-glucose:glycoprotein glucosyltransferase 1 (1551 aa).

The signal sequence occupies residues 1–42 (MCSRGDANAAGAAAARRVTGLCYNMGLLIALALLCLFSLAEA). Asn269, Asn536, Asn1015, and Asn1228 each carry an N-linked (GlcNAc...) asparagine glycan. The tract at residues 1244-1551 (KTEEVKQDKD…QEGSQKHEEL (308 aa)) is glucosyltransferase. Ser1277 carries the post-translational modification Phosphoserine. The tract at residues 1531 to 1551 (KELGTLHEEETQEGSQKHEEL) is disordered. The short motif at 1548–1551 (HEEL) is the Prevents secretion from ER element.

It belongs to the glycosyltransferase 8 family. In terms of assembly, monomer as well as in a tight complex with SELENOF. Interacts with METTL23. Part of a large chaperone multiprotein complex comprising DNAJB11, HSP90B1, HSPA5, HYOU, PDIA2, PDIA4, PDIA6, PPIB, SDF2L1, UGGT1 and very small amounts of ERP29, but not, or at very low levels, CALR nor CANX. It depends on Ca(2+) as a cofactor.

The protein localises to the endoplasmic reticulum lumen. The protein resides in the endoplasmic reticulum-Golgi intermediate compartment. It carries out the reaction N(4)-(alpha-D-Man-(1-&gt;2)-alpha-D-Man-(1-&gt;2)-alpha-D-Man-(1-&gt;3)-[alpha-D-Man-(1-&gt;2)-alpha-D-Man-(1-&gt;3)-[alpha-D-Man-(1-&gt;2)-alpha-D-Man-(1-&gt;6)]-alpha-D-Man-(1-&gt;6)]-beta-D-Man-(1-&gt;4)-beta-D-GlcNAc-(1-&gt;4)-beta-D-GlcNAc)-L-asparaginyl-[protein] (N-glucan mannose isomer 9A1,2,3B1,2,3) + UDP-alpha-D-glucose = N(4)-(alpha-D-Glc-(1-&gt;3)-alpha-D-Man-(1-&gt;2)-alpha-D-Man-(1-&gt;2)-alpha-D-Man-(1-&gt;3)-[alpha-D-Man-(1-&gt;2)-alpha-D-Man-(1-&gt;3)-[alpha-D-Man-(1-&gt;2)-alpha-D-Man-(1-&gt;6)]-alpha-D-Man-(1-&gt;6)]-beta-D-Man-(1-&gt;4)-beta-D-GlcNAc-(1-&gt;4)-beta-D-GlcNAc)-L-asparaginyl-[protein] + UDP + H(+). Its pathway is protein modification; protein glycosylation. Its function is as follows. Recognizes glycoproteins with minor folding defects. Reglucosylates single N-glycans near the misfolded part of the protein, thus providing quality control for protein folding in the endoplasmic reticulum. Reglucosylated proteins are recognized by calreticulin for recycling to the endoplasmic reticulum and refolding or degradation. The polypeptide is UDP-glucose:glycoprotein glucosyltransferase 1 (Uggt1) (Rattus norvegicus (Rat)).